Here is a 103-residue protein sequence, read N- to C-terminus: MIELSYAPDVAGRRSNWPKGSGVNTWTAIRWTFAEDSPYVGTGLERMASDTHGGGGGRPVTPPPPGMHHLGCSRGVLLISSQRDAGHKTCDPAAGGTLTSVLT.

2 disordered regions span residues M1–G20 and L44–G71. An N-terminal signal peptide occupies residues M1–A34.

This is an uncharacterized protein from Mycobacterium tuberculosis (strain CDC 1551 / Oshkosh).